The chain runs to 504 residues: Pentatricopeptide repeat-containing protein At1g05600 (504 aa).

PPR repeat units follow at residues 45–79 (NGSV…SCEC), 80–114 (KDSV…NCVN), 115–145 (WSLS…YCYG), 151–185 (RITA…GCYP), 186–216 (DRDS…MFWR), 225–259 (DIVV…GLKA), 260–296 (PKRC…GAIP), 297–331 (CLDS…GFEP), 332–367 (TPFI…HCLP), 368–398 (TVGV…MSKQ), 404–438 (NEET…SHFP), and 439–473 (GVET…DMVP).

Belongs to the PPR family. P subfamily.

This is Pentatricopeptide repeat-containing protein At1g05600 from Arabidopsis thaliana (Mouse-ear cress).